The primary structure comprises 99 residues: Aspartyl/glutamyl-tRNA(Asn/Gln) amidotransferase subunit C (99 aa).

Belongs to the GatC family. Heterotrimer of A, B and C subunits.

The catalysed reaction is L-glutamyl-tRNA(Gln) + L-glutamine + ATP + H2O = L-glutaminyl-tRNA(Gln) + L-glutamate + ADP + phosphate + H(+). It carries out the reaction L-aspartyl-tRNA(Asn) + L-glutamine + ATP + H2O = L-asparaginyl-tRNA(Asn) + L-glutamate + ADP + phosphate + 2 H(+). Functionally, allows the formation of correctly charged Asn-tRNA(Asn) or Gln-tRNA(Gln) through the transamidation of misacylated Asp-tRNA(Asn) or Glu-tRNA(Gln) in organisms which lack either or both of asparaginyl-tRNA or glutaminyl-tRNA synthetases. The reaction takes place in the presence of glutamine and ATP through an activated phospho-Asp-tRNA(Asn) or phospho-Glu-tRNA(Gln). The protein is Aspartyl/glutamyl-tRNA(Asn/Gln) amidotransferase subunit C of Corynebacterium glutamicum (strain R).